Consider the following 169-residue polypeptide: Crossover junction endodeoxyribonuclease RuvC (169 aa).

Residues aspartate 11, glutamate 71, and histidine 143 contribute to the active site. Aspartate 11, glutamate 71, and histidine 143 together coordinate Mg(2+).

Belongs to the RuvC family. Homodimer which binds Holliday junction (HJ) DNA. The HJ becomes 2-fold symmetrical on binding to RuvC with unstacked arms; it has a different conformation from HJ DNA in complex with RuvA. In the full resolvosome a probable DNA-RuvA(4)-RuvB(12)-RuvC(2) complex forms which resolves the HJ. The cofactor is Mg(2+).

It localises to the cytoplasm. It carries out the reaction Endonucleolytic cleavage at a junction such as a reciprocal single-stranded crossover between two homologous DNA duplexes (Holliday junction).. Its function is as follows. The RuvA-RuvB-RuvC complex processes Holliday junction (HJ) DNA during genetic recombination and DNA repair. Endonuclease that resolves HJ intermediates. Cleaves cruciform DNA by making single-stranded nicks across the HJ at symmetrical positions within the homologous arms, yielding a 5'-phosphate and a 3'-hydroxyl group; requires a central core of homology in the junction. The consensus cleavage sequence is 5'-(A/T)TT(C/G)-3'. Cleavage occurs on the 3'-side of the TT dinucleotide at the point of strand exchange. HJ branch migration catalyzed by RuvA-RuvB allows RuvC to scan DNA until it finds its consensus sequence, where it cleaves and resolves the cruciform DNA. The polypeptide is Crossover junction endodeoxyribonuclease RuvC (Mesorhizobium japonicum (strain LMG 29417 / CECT 9101 / MAFF 303099) (Mesorhizobium loti (strain MAFF 303099))).